We begin with the raw amino-acid sequence, 481 residues long: G-protein coupled receptor 37-like 1 (481 aa).

An N-terminal signal peptide occupies residues 1 to 25 (MRWLWPLAVSLAVILAVGLSRVSGG). Disordered stretches follow at residues 26–58 (APLH…GVQQ) and 70–108 (PIHP…NLTG). The Extracellular portion of the chain corresponds to 26–134 (APLHLGRHRA…ESSYSAYAIM (109 aa)). O-linked (GalNAc...) threonine glycans are attached at residues T79 and T85. S86 carries O-linked (GalNAc...) serine glycosylation. An O-linked (GalNAc...) threonine glycan is attached at T95. N105 is a glycosylation site (N-linked (GlcNAc...) asparagine). O-linked (GalNAc...) threonine glycosylation occurs at T107. A helical transmembrane segment spans residues 135–155 (LLALVVFAVGIVGNLSVMCIV). Over 156-167 (WHSYYLKSAWNS) the chain is Cytoplasmic. A helical membrane pass occupies residues 168–188 (ILASLALWDFLVLFFCLPIVI). Residues 189-205 (FNEITKQRLLGDVSCRA) lie on the Extracellular side of the membrane. A disulfide bridge links C203 with C286. The helical transmembrane segment at 206–226 (VPFMEVSSLGVTTFSLCALGI) threads the bilayer. The Cytoplasmic segment spans residues 227–251 (DRFHVATSTLPKVRPIERCQSILAK). The helical transmembrane segment at 252 to 272 (LAVIWVGSMTLAVPELLLWQL) threads the bilayer. At 273 to 310 (AQEPAPTMGTLDSCIMKPSASLPESLYSLVMTYQNARM) the chain is on the extracellular side. A helical membrane pass occupies residues 311–331 (WWYFGCYFCLPILFTVTCQLV). Topologically, residues 332–361 (TWRVRGPPGRKSECRASKHEQCESQLNSTV) are cytoplasmic. A helical transmembrane segment spans residues 362 to 382 (VGLTVVYAFCTLPENVCNIVV). Over 383–398 (AYLSTELTRQTLDLLG) the chain is Extracellular. Residues 399-419 (LINQFSTFFKGAITPVLLLCI) traverse the membrane as a helical segment. Residues 420–481 (CRPLGQAFLD…PPLLPLGTPC (62 aa)) are Cytoplasmic-facing. A Phosphoserine modification is found at S471. T479 is subject to Phosphothreonine.

Belongs to the G-protein coupled receptor 1 family. Interacts with the PTCH1 receptor. Post-translationally, O-glycosylated. In terms of processing, undergoes metalloprotease-mediated cleavage which reduces its constitutive activity. Ubiquitinated. Expressed in primary cortical astrocytes (at protein level). Expressed in the central nervous system.

The protein localises to the cell membrane. It is found in the cell projection. The protein resides in the cilium membrane. Functionally, G-protein coupled receptor. Has been shown to bind the neuroprotective and glioprotective factor prosaposin (PSAP), leading to endocytosis followed by an ERK phosphorylation cascade. However, other studies have shown that prosaposin does not increase activity. It has been suggested that GPR37L1 is a constitutively active receptor which signals through the guanine nucleotide-binding protein G(s) subunit alpha. Participates in the regulation of postnatal cerebellar development by modulating the Shh pathway. Regulates baseline blood pressure in females and protects against cardiovascular stress in males. Mediates inhibition of astrocyte glutamate transporters and reduction in neuronal N-methyl-D-aspartate receptor activity. This Homo sapiens (Human) protein is G-protein coupled receptor 37-like 1 (GPR37L1).